The sequence spans 1736 residues: Collagen alpha-2(XI) chain (1736 aa).

The signal sequence occupies residues 1 to 27; that stretch reads MERCSRCHRLLLFLPLVLGLSAAPGWA. Residues 57–228 enclose the Laminin G-like domain; that stretch reads DVAYRVARPA…QSCGQKDLEC (172 aa). Residues 215–486 form a nonhelical region region; that stretch reads QAAYQSCGQK…ILQQARLALR (272 aa). Disordered stretches follow at residues 228–270, 364–465, and 485–1538; these read CERE…PTES, LSAE…DKGP, and LRGP…GSPA. Residues 258–269 are compositionally biased toward polar residues; sequence PQSQEPQKQPTE. Collagen-like domains follow at residues 399–447, 487–545, and 546–583; these read GPPG…GPPG, GPPG…ADGA, and RGMPGEPGMKGDRGFDGLPGLPGEKGQRGDTGAQGLPG. The tract at residues 487–1500 is triple-helical region; that stretch reads GPPGPMGYTG…PGHPGPPGEV (1014 aa). Over residues 497–533 the composition is skewed to low complexity; that stretch reads RPGPLGQPGSPGLKGESGDLGPQGPRGPQGLTGPPGK. Positions 615–624 are enriched in pro residues; sequence KGPPGIPGPP. The segment covering 650-668 has biased composition (low complexity); sequence QQGTPGAQGLPGPQGAIGP. The region spanning 682-737 is the Collagen-like 4 domain; it reads GMPGSDGLPGHPGKEGPPGTKGNQGPSGPQGPLGYPGPRGVKGVDGIRGLKGHKGE. Residues 765-774 are compositionally biased toward basic and acidic residues; sequence RGEDGPEGPK. Composition is skewed to low complexity over residues 776 to 789 and 842 to 861; these read RTGPTGDPGPTGLM and PTGPRGQRGPRGATGKSGAK. 5 consecutive Collagen-like domains span residues 868-924, 967-1025, 1026-1055, 1056-1086, and 1114-1172; these read GPHG…PGPP, GDPG…AAGS, GGPIGPPGRPGPQGPPGAAGEKGVPGEKGP, IGPTGRDGVQGPVGLPGPAGPPGVAGEDGDK, and GPVG…ETGD. A compositionally biased stretch (gly residues) spans 994–1003; sequence GTAGGPGLKG. Over residues 1029–1040 the composition is skewed to pro residues; it reads IGPPGRPGPQGP. Low complexity-rich tracts occupy residues 1115-1133 and 1155-1164; these read PVGQPGAAGADGEPGARGP and IGLQGLPGPS. The segment covering 1176 to 1187 has biased composition (pro residues); it reads MGPPGPPGPRGP. Positions 1188-1197 are enriched in low complexity; that stretch reads AGPNGADGPQ. Positions 1198–1207 are enriched in gly residues; it reads GSPGGVGNLG. A compositionally biased stretch (low complexity) spans 1217-1230; it reads ESGSPGVQGEPGVK. Basic and acidic residues predominate over residues 1232 to 1241; sequence PRGERGEKGE. Low complexity predominate over residues 1256–1272; the sequence is PTGDNGPKGNPGPVGFP. Over residues 1287 to 1296 the composition is skewed to basic and acidic residues; sequence DGAKGDRGED. The segment covering 1376–1386 has biased composition (low complexity); sequence QQGRPGATGQA. Composition is skewed to pro residues over residues 1388-1397 and 1457-1467; these read PPGPVGPPGL and PGGPPGLPGPS. Collagen-like domains lie at 1393 to 1447 and 1448 to 1499; these read GPPG…GETG and IPGA…PPGE. Residues 1469 to 1481 show a composition bias toward low complexity; it reads PKGAKGATGPAGP. A propeptide spans 1501 to 1736 (C-terminal propeptide); that stretch reads IQPLPIQMPK…VLLGPVCFMG (236 aa). The Fibrillar collagen NC1 domain occupies 1541–1735; the sequence is EEIFGSLDSL…GVLLGPVCFM (195 aa). Cys1571 and Cys1603 are oxidised to a cystine. Positions 1589, 1591, 1592, 1594, and 1597 each coordinate Ca(2+). The N-linked (GlcNAc...) asparagine glycan is linked to Asn1604. Intrachain disulfides connect Cys1612–Cys1733 and Cys1655–Cys1689.

The protein belongs to the fibrillar collagen family. In terms of assembly, trimers composed of three different chains: alpha 1(XI), alpha 2(XI), and alpha 3(XI). Alpha 3(XI) is a post-translational modification of alpha 1(II). Alpha 1(V) can also be found instead of alpha 3(XI)=1(II). Prolines at the third position of the tripeptide repeating unit (G-X-Y) are hydroxylated in some or all of the chains.

The protein resides in the secreted. It is found in the extracellular space. It localises to the extracellular matrix. May play an important role in fibrillogenesis by controlling lateral growth of collagen II fibrils. This Mus musculus (Mouse) protein is Collagen alpha-2(XI) chain (Col11a2).